Consider the following 200-residue polypeptide: Dephospho-CoA kinase (200 aa).

The region spanning 4 to 200 (TIGLTGSVAT…TFIKRFVKNK (197 aa)) is the DPCK domain. Residue 12-17 (ATGKST) coordinates ATP.

The protein belongs to the CoaE family.

It localises to the cytoplasm. It catalyses the reaction 3'-dephospho-CoA + ATP = ADP + CoA + H(+). It participates in cofactor biosynthesis; coenzyme A biosynthesis; CoA from (R)-pantothenate: step 5/5. Catalyzes the phosphorylation of the 3'-hydroxyl group of dephosphocoenzyme A to form coenzyme A. The sequence is that of Dephospho-CoA kinase from Listeria monocytogenes serotype 4b (strain F2365).